A 98-amino-acid polypeptide reads, in one-letter code: Complement inhibitor RaCI2 (98 aa).

The signal sequence occupies residues 1–21 (MNAVTVLAFTAFALIVHDCYS). Intrachain disulfides connect Cys-35–Cys-59, Cys-40–Cys-61, and Cys-55–Cys-76.

Belongs to the RaCI family. Expressed in salivary glands.

Its subcellular location is the secreted. Functionally, complement inhibitor. Prevents complement-mediated C5 activation by binding to C5. Binds C5 at a different binding site than the other tick complement inhibitors OmCI and CirpT1, and the drug eculizumab. This is Complement inhibitor RaCI2 from Rhipicephalus microplus (Cattle tick).